A 101-amino-acid chain; its full sequence is Feather keratin Cos2-2 (101 aa).

N-acetylserine is present on S2.

It belongs to the avian keratin family. As to quaternary structure, the avian keratins (F-ker, S-ker, C-ker and B-ker) are a complex mixture of very similar polypeptides.

The sequence is that of Feather keratin Cos2-2 from Columba livia (Rock dove).